The primary structure comprises 445 residues: Xylose isomerase (445 aa).

Residues His109 and Asp112 contribute to the active site. Mg(2+) is bound by residues Glu240, Glu276, His279, Asp304, Asp315, Asp317, and Asp347.

Belongs to the xylose isomerase family. Homotetramer. Mg(2+) serves as cofactor.

Its subcellular location is the cytoplasm. The enzyme catalyses alpha-D-xylose = alpha-D-xylulofuranose. This Xanthomonas oryzae pv. oryzae (strain MAFF 311018) protein is Xylose isomerase.